The following is a 284-amino-acid chain: NAD kinase (284 aa).

Asp-61 (proton acceptor) is an active-site residue. Residues 61 to 62 (DG), Arg-66, 136 to 137 (ND), Arg-147, Lys-164, Asp-166, and Leu-201 contribute to the NAD(+) site.

This sequence belongs to the NAD kinase family. The cofactor is a divalent metal cation.

It localises to the cytoplasm. It catalyses the reaction NAD(+) + ATP = ADP + NADP(+) + H(+). Involved in the regulation of the intracellular balance of NAD and NADP, and is a key enzyme in the biosynthesis of NADP. Catalyzes specifically the phosphorylation on 2'-hydroxyl of the adenosine moiety of NAD to yield NADP. The polypeptide is NAD kinase (Dehalococcoides mccartyi (strain CBDB1)).